The primary structure comprises 232 residues: UPF0173 metal-dependent hydrolase Msil_0741 (232 aa).

The protein belongs to the UPF0173 family.

This chain is UPF0173 metal-dependent hydrolase Msil_0741, found in Methylocella silvestris (strain DSM 15510 / CIP 108128 / LMG 27833 / NCIMB 13906 / BL2).